A 125-amino-acid chain; its full sequence is Upsalin (125 aa).

Residues 1 to 16 (MFPTHVLLIVIACVTA) form the signal peptide.

In terms of processing, weakly glycosylated. In terms of tissue distribution, expressed at highest levels in mantle, followed by adductor muscle. Found in the nacreous shell layer (at protein level).

The protein localises to the secreted. The protein is Upsalin of Unio pictorum (Painter's mussel).